The primary structure comprises 868 residues: DNA topoisomerase 1 (868 aa).

The 146-residue stretch at 3-148 (KSLVIVESPA…RFSRVVFNEI (146 aa)) folds into the Toprim domain. Mg(2+) is bound by residues Glu-9 and Asp-117. In terms of domain architecture, Topo IA-type catalytic spans 164-581 (NMDRVNAQQT…QFFKDFSSQL (418 aa)). Residues 198 to 203 (SAGRVQ) are interaction with DNA. Tyr-325 acts as the O-(5'-phospho-DNA)-tyrosine intermediate in catalysis. 3 C4-type zinc fingers span residues 605 to 636 (CPTC…KERC), 667 to 694 (CTKC…NPNC), and 716 to 739 (CDKC…CTNC).

The protein belongs to the type IA topoisomerase family. Monomer. It depends on Mg(2+) as a cofactor.

It carries out the reaction ATP-independent breakage of single-stranded DNA, followed by passage and rejoining.. In terms of biological role, releases the supercoiling and torsional tension of DNA, which is introduced during the DNA replication and transcription, by transiently cleaving and rejoining one strand of the DNA duplex. Introduces a single-strand break via transesterification at a target site in duplex DNA. The scissile phosphodiester is attacked by the catalytic tyrosine of the enzyme, resulting in the formation of a DNA-(5'-phosphotyrosyl)-enzyme intermediate and the expulsion of a 3'-OH DNA strand. The free DNA strand then undergoes passage around the unbroken strand, thus removing DNA supercoils. Finally, in the religation step, the DNA 3'-OH attacks the covalent intermediate to expel the active-site tyrosine and restore the DNA phosphodiester backbone. This is DNA topoisomerase 1 from Haemophilus influenzae (strain ATCC 51907 / DSM 11121 / KW20 / Rd).